Reading from the N-terminus, the 181-residue chain is Peptidyl-tRNA hydrolase (181 aa).

Position 14 (tyrosine 14) interacts with tRNA. The Proton acceptor role is filled by histidine 19. Residues tyrosine 60, asparagine 62, and asparagine 108 each coordinate tRNA.

It belongs to the PTH family. Monomer.

The protein localises to the cytoplasm. It catalyses the reaction an N-acyl-L-alpha-aminoacyl-tRNA + H2O = an N-acyl-L-amino acid + a tRNA + H(+). Hydrolyzes ribosome-free peptidyl-tRNAs (with 1 or more amino acids incorporated), which drop off the ribosome during protein synthesis, or as a result of ribosome stalling. Its function is as follows. Catalyzes the release of premature peptidyl moieties from peptidyl-tRNA molecules trapped in stalled 50S ribosomal subunits, and thus maintains levels of free tRNAs and 50S ribosomes. This Metamycoplasma arthritidis (strain 158L3-1) (Mycoplasma arthritidis) protein is Peptidyl-tRNA hydrolase.